The chain runs to 165 residues: Crossover junction endodeoxyribonuclease RuvC (165 aa).

Residues aspartate 8, glutamate 66, and aspartate 138 contribute to the active site. Aspartate 8, glutamate 66, and aspartate 138 together coordinate Mg(2+).

The protein belongs to the RuvC family. In terms of assembly, homodimer which binds Holliday junction (HJ) DNA. The HJ becomes 2-fold symmetrical on binding to RuvC with unstacked arms; it has a different conformation from HJ DNA in complex with RuvA. In the full resolvosome a probable DNA-RuvA(4)-RuvB(12)-RuvC(2) complex forms which resolves the HJ. The cofactor is Mg(2+).

Its subcellular location is the cytoplasm. It catalyses the reaction Endonucleolytic cleavage at a junction such as a reciprocal single-stranded crossover between two homologous DNA duplexes (Holliday junction).. Functionally, the RuvA-RuvB-RuvC complex processes Holliday junction (HJ) DNA during genetic recombination and DNA repair. Endonuclease that resolves HJ intermediates. Cleaves cruciform DNA by making single-stranded nicks across the HJ at symmetrical positions within the homologous arms, yielding a 5'-phosphate and a 3'-hydroxyl group; requires a central core of homology in the junction. The consensus cleavage sequence is 5'-(A/T)TT(C/G)-3'. Cleavage occurs on the 3'-side of the TT dinucleotide at the point of strand exchange. HJ branch migration catalyzed by RuvA-RuvB allows RuvC to scan DNA until it finds its consensus sequence, where it cleaves and resolves the cruciform DNA. This Methylococcus capsulatus (strain ATCC 33009 / NCIMB 11132 / Bath) protein is Crossover junction endodeoxyribonuclease RuvC.